We begin with the raw amino-acid sequence, 410 residues long: Mitochondrial potassium channel (410 aa).

The N-terminal 35 residues, 1 to 35, are a transit peptide targeting the mitochondrion; the sequence is MTGCSPVFTMQQVVGVSHRLVWRTFRGTDLLMTRT. Topologically, residues 36-201 are mitochondrial matrix; it reads LCSPGPSRPG…KERTRAERTK (166 aa). Residues 116–143 adopt a coiled-coil conformation; it reads VREAREDLEAQQTKLKEVRDRLDRVSRE. The helical transmembrane segment at 202–222 threads the bilayer; sequence NWSLIGSVLGALIGVAGSTYV. The Mitochondrial intermembrane portion of the chain corresponds to 223–385; the sequence is NRVRLQELKA…RLEAQANRNA (163 aa). The segment at 276-296 is disordered; that stretch reads GQDQGSGSPTGPSSPRGKDID. Residues 280 to 290 are compositionally biased toward low complexity; the sequence is GSGSPTGPSSP. Residues 386 to 406 form a helical membrane-spanning segment; that stretch reads ISSTLVTCVTFMATLPLLYML. Over 407–410 the chain is Mitochondrial matrix; the sequence is FKTS.

The mitochondrial potassium channel (mitoK(ATP)) forms a heteromultimer.

The protein resides in the mitochondrion inner membrane. It carries out the reaction K(+)(in) = K(+)(out). Channel activity inhibited by ATP via ABCB8/MITOSUR subunit. In terms of biological role, pore-forming subunit of the mitochondrial ATP-gated potassium channel (mitoK(ATP)). Together with ATP-binding subunit ABCB8/MITOSUR of the mitoK(ATP) channel, mediates ATP-dependent K(+) currents across the mitochondrial inner membrane. An increase in ATP intracellular levels closes the channel, inhibiting K(+) transport, whereas a decrease in ATP levels enhances K(+) uptake in the mitochondrial matrix. May contribute to the homeostatic control of cellular metabolism under stress conditions by regulating the mitochondrial matrix volume. This chain is Mitochondrial potassium channel, found in Rattus norvegicus (Rat).